Consider the following 347-residue polypeptide: NADH-ubiquinone oxidoreductase chain 2 (347 aa).

Transmembrane regions (helical) follow at residues 3-23 (PPIL…VLTS), 25-45 (HWLL…PILM), 60-80 (FLTQ…NLMF), 96-116 (GLVT…FWVP), 122-142 (ISLS…LSIL), 153-173 (LLIT…LNQT), 178-198 (ILAY…TYNP), 200-220 (LMIL…MLFM), 237-257 (LPLM…LPPL), 274-294 (DMII…YFYM), and 323-343 (IILL…TPMM).

The protein belongs to the complex I subunit 2 family. As to quaternary structure, core subunit of respiratory chain NADH dehydrogenase (Complex I) which is composed of 45 different subunits. Interacts with TMEM242.

Its subcellular location is the mitochondrion inner membrane. It carries out the reaction a ubiquinone + NADH + 5 H(+)(in) = a ubiquinol + NAD(+) + 4 H(+)(out). Core subunit of the mitochondrial membrane respiratory chain NADH dehydrogenase (Complex I) which catalyzes electron transfer from NADH through the respiratory chain, using ubiquinone as an electron acceptor. Essential for the catalytic activity and assembly of complex I. This is NADH-ubiquinone oxidoreductase chain 2 from Halichoerus grypus (Gray seal).